Reading from the N-terminus, the 93-residue chain is UPF0728 protein C10orf53 homolog (93 aa).

Belongs to the UPF0728 family.

The protein is UPF0728 protein C10orf53 homolog of Xenopus tropicalis (Western clawed frog).